A 445-amino-acid polypeptide reads, in one-letter code: Histidine--tRNA ligase (445 aa).

It belongs to the class-II aminoacyl-tRNA synthetase family. As to quaternary structure, homodimer.

It is found in the cytoplasm. The catalysed reaction is tRNA(His) + L-histidine + ATP = L-histidyl-tRNA(His) + AMP + diphosphate + H(+). This is Histidine--tRNA ligase from Mycoplasma mobile (strain ATCC 43663 / 163K / NCTC 11711) (Mesomycoplasma mobile).